A 234-amino-acid polypeptide reads, in one-letter code: Large ribosomal subunit protein uL1 (234 aa).

It belongs to the universal ribosomal protein uL1 family. In terms of assembly, part of the 50S ribosomal subunit.

Functionally, binds directly to 23S rRNA. The L1 stalk is quite mobile in the ribosome, and is involved in E site tRNA release. Its function is as follows. Protein L1 is also a translational repressor protein, it controls the translation of the L11 operon by binding to its mRNA. The polypeptide is Large ribosomal subunit protein uL1 (Anaeromyxobacter dehalogenans (strain 2CP-1 / ATCC BAA-258)).